A 117-amino-acid chain; its full sequence is MFLFRRKDYRIEIQKKKVVKSFFQMVYYRALRQHFCQTKSFKHSSKRNVSMMVIGKHRAYLKSLRHHIKGFIITFLVSFSRNLHGKTLDVGSINATRISSPPDNFLNWVFSFYSCSE.

This is an uncharacterized protein from Saccharomyces cerevisiae (strain ATCC 204508 / S288c) (Baker's yeast).